The chain runs to 918 residues: UPF0182 protein CPF_0011 (918 aa).

The next 7 membrane-spanning stretches (helical) occupy residues 8–28 (TVLISILLLVVVFFVSTNFII), 46–66 (LIAICKLFVPIFILYFCVIAI), 91–111 (FLLSNLVISILGAGATATTQW), 151–171 (AISLIIILVLITVIIYLALGF), 200–220 (LAVLASVLSLLIGCSYLLKSY), 243–263 (IFYKVIAVACVISSIVVFISI), and 271–291 (IIISIASIAVLIVLEPVVAIF). The segment covering 857 to 869 (EENKNSNKDETPK) has biased composition (basic and acidic residues). The interval 857 to 876 (EENKNSNKDETPKNEITSDN) is disordered.

This sequence belongs to the UPF0182 family.

It localises to the cell membrane. In Clostridium perfringens (strain ATCC 13124 / DSM 756 / JCM 1290 / NCIMB 6125 / NCTC 8237 / Type A), this protein is UPF0182 protein CPF_0011.